We begin with the raw amino-acid sequence, 132 residues long: Female-specific protein 800 (132 aa).

Its function is as follows. FS800 is likely to have some function in the production or maintenance of the schistosome egg. It may have a function unrelated to eggshell formation. This chain is Female-specific protein 800, found in Schistosoma mansoni (Blood fluke).